Here is a 151-residue protein sequence, read N- to C-terminus: Large-conductance mechanosensitive channel (151 aa).

Helical transmembrane passes span 14 to 34 (VVDM…VNTL), 38 to 58 (VLMP…LYLI), and 86 to 106 (GLFL…FLLV).

It belongs to the MscL family. In terms of assembly, homopentamer.

It is found in the cell inner membrane. Functionally, channel that opens in response to stretch forces in the membrane lipid bilayer. May participate in the regulation of osmotic pressure changes within the cell. This Pelodictyon phaeoclathratiforme (strain DSM 5477 / BU-1) protein is Large-conductance mechanosensitive channel.